A 139-amino-acid polypeptide reads, in one-letter code: Putative nickel-responsive regulator (139 aa).

H79, H90, H92, and C98 together coordinate Ni(2+).

The protein belongs to the transcriptional regulatory CopG/NikR family. The cofactor is Ni(2+).

Functionally, transcriptional regulator. This Nitratidesulfovibrio vulgaris (strain ATCC 29579 / DSM 644 / CCUG 34227 / NCIMB 8303 / VKM B-1760 / Hildenborough) (Desulfovibrio vulgaris) protein is Putative nickel-responsive regulator.